Reading from the N-terminus, the 156-residue chain is Insulin (156 aa).

A signal peptide spans 1–31 (MSKFLLQSHSANACLLTLLLTLASNLDISLA). 4 disulfides stabilise this stretch: Cys-37–Cys-114, Cys-49–Cys-119, Cys-61–Cys-128, and Cys-112–Cys-115. A propeptide spans 79 to 93 (DTENVNDKLRGILLN) (c peptide beta). Residues 96–102 (EAFSYLT) constitute a propeptide, c peptide alpha. A propeptide spans 141–156 (TGRSNSGHAQLEDNFS) (d peptide). Positions 144–156 (SNSGHAQLEDNFS) are cleaved as a propeptide — d peptide short form. A 4-carboxyglutamate modification is found at Glu-152.

The protein belongs to the insulin family. Heterodimer of a B chain or a B chain' and an A chain probably linked by three disulfide bonds. As to expression, expressed in the central region of the cerebral ganglia mostly within the F and C clusters.

It is found in the secreted. Functionally, involved in glucose metabolism. The protein is Insulin (PIN) of Aplysia californica (California sea hare).